Here is a 234-residue protein sequence, read N- to C-terminus: Probable septum site-determining protein MinC (234 aa).

Belongs to the MinC family. As to quaternary structure, interacts with MinD and FtsZ.

In terms of biological role, cell division inhibitor that blocks the formation of polar Z ring septums. Rapidly oscillates between the poles of the cell to destabilize FtsZ filaments that have formed before they mature into polar Z rings. Prevents FtsZ polymerization. The polypeptide is Probable septum site-determining protein MinC (Buchnera aphidicola subsp. Baizongia pistaciae (strain Bp)).